Consider the following 393-residue polypeptide: 4-hydroxyphenylpyruvate dioxygenase (393 aa).

Thr-2 carries the N-acetylthreonine modification. 2 VOC domains span residues 18-149 (HFHS…LVEK) and 180-338 (IIDH…IFTK). N6-succinyllysine is present on Lys-132. His-183 is a Fe cation binding site. A phosphoserine mark is found at Ser-211, Ser-226, and Ser-250. Residues His-266 and Glu-349 each contribute to the Fe cation site.

This sequence belongs to the 4HPPD family. Homodimer. The cofactor is Fe cation.

It is found in the cytoplasm. The protein localises to the endoplasmic reticulum membrane. It localises to the golgi apparatus membrane. It carries out the reaction 3-(4-hydroxyphenyl)pyruvate + O2 = homogentisate + CO2. Its pathway is amino-acid degradation; L-phenylalanine degradation; acetoacetate and fumarate from L-phenylalanine: step 3/6. Functionally, catalyzes the conversion of 4-hydroxyphenylpyruvic acid to homogentisic acid, one of the steps in tyrosine catabolism. This is 4-hydroxyphenylpyruvate dioxygenase (Hpd) from Rattus norvegicus (Rat).